A 706-amino-acid chain; its full sequence is Polyribonucleotide nucleotidyltransferase (706 aa).

Positions 490 and 496 each coordinate Mg(2+). The KH domain maps to 556–615; the sequence is PRIETMQIPTDKIREVIGSGGKVIREIVEVSGAKVDINDEGIIKIASPNGDSIQKAYDMI. Positions 625 to 693 constitute an S1 motif domain; the sequence is GKIYKGKVVK…DRGKVRLAMK (69 aa).

This sequence belongs to the polyribonucleotide nucleotidyltransferase family. The cofactor is Mg(2+).

The protein resides in the cytoplasm. The catalysed reaction is RNA(n+1) + phosphate = RNA(n) + a ribonucleoside 5'-diphosphate. In terms of biological role, involved in mRNA degradation. Catalyzes the phosphorolysis of single-stranded polyribonucleotides processively in the 3'- to 5'-direction. This is Polyribonucleotide nucleotidyltransferase from Jannaschia sp. (strain CCS1).